Consider the following 542-residue polypeptide: MHRRNLLKASMAIAAYTGLSATGLLASRAWAASGGAADGEAQAFDFETLKRQAKQLAGSAYQDTKQVLPPTLATMTPQNFNAIRYDGEHSLWKENKGQLDVQFFHVGMGFRQPVRMYSVDPKTRTAREVHFRPQLFNYENTSVDTQQLKGDLGFAGFKLFKAPELDRHDVVSFLGASYFRAVDATGQYGLSARGLAVDTYAKKREEFPDFTKFWFETPDQNATRFVVYALLDSPSATGAYRFDIDCQAERVVMEVDAHINARTAIEQLGIAPMTSMFSCGTHERRMCDTIHPQIHDSDRLAMWRGNGEWICRPLNNPATLQFNAFADTDPKGFGLVQTDHEFANYQDTVDWYSKRPSLWVEPTTAWGEGSIDLLEIPTTGETLDNIVAFWTPKKPVAAGDSLNYGYKLYWSALPPVGTPLARVHATRSGMGGFVEGWAPGEHYPPVWARRFAVDFTGGGLDRLPQGTGIEPVVTCSNGKVQDFSVLVLDDIKGYRILFDWYPTNDSVEPVELRLFIRTNDRTLSETWLYQYFPPAPDKRKYP.

The tat-type signal signal peptide spans 1–31; the sequence is MHRRNLLKASMAIAAYTGLSATGLLASRAWA.

It belongs to the OpgD/OpgG family. In terms of processing, predicted to be exported by the Tat system. The position of the signal peptide cleavage has not been experimentally proven.

The protein localises to the periplasm. It participates in glycan metabolism; osmoregulated periplasmic glucan (OPG) biosynthesis. Probably involved in the control of the structural glucose backbone of osmoregulated periplasmic glucans (OPGs). The protein is Glucans biosynthesis protein D of Pseudomonas fluorescens (strain Pf0-1).